A 136-amino-acid polypeptide reads, in one-letter code: Phosphoribosyl-AMP cyclohydrolase (136 aa).

Asp92 is a Mg(2+) binding site. Position 93 (Cys93) interacts with Zn(2+). Mg(2+)-binding residues include Asp94 and Asp96. Cys109 and Cys116 together coordinate Zn(2+).

The protein belongs to the PRA-CH family. As to quaternary structure, homodimer. Mg(2+) is required as a cofactor. Requires Zn(2+) as cofactor.

It is found in the cytoplasm. It carries out the reaction 1-(5-phospho-beta-D-ribosyl)-5'-AMP + H2O = 1-(5-phospho-beta-D-ribosyl)-5-[(5-phospho-beta-D-ribosylamino)methylideneamino]imidazole-4-carboxamide. It participates in amino-acid biosynthesis; L-histidine biosynthesis; L-histidine from 5-phospho-alpha-D-ribose 1-diphosphate: step 3/9. With respect to regulation, reversibly inhibited by EDTA and free zinc ions. Enzyme is inactivated by dialysis against 1,10-phenanthroline, which is a zinc specific chelator. Its function is as follows. Catalyzes the hydrolysis of the adenine ring of phosphoribosyl-AMP. This chain is Phosphoribosyl-AMP cyclohydrolase, found in Methanococcus vannielii.